The sequence spans 290 residues: MNFEYIINSLLETIKTYNFFVDWEKIENNIKKIEKRLHILNYLIGKENFKEEFFELLKEYPEVITVFPILIAVRDNKITILNENMELETLEFKEKKYLTDEEIERYYKFFKETGLEDLLKNRKIKNLVDYVFGVEVGMDTNARKNRIGDLMENIVKKYIENLCKQNKNLDYIFQATKDKIKQKWGINLTLDKTNRKFDFAVFNKNTKKLYLIEVNFYSGGGSKLKATAGEYRSLNEFIKNNNNNVQFIWITDGKGWNTAKNPLKESFNSGVVILNLKMVKEGLLKEILTQ.

Belongs to the DpnII type II restriction endonuclease family.

It catalyses the reaction Endonucleolytic cleavage of DNA to give specific double-stranded fragments with terminal 5'-phosphates.. Its function is as follows. A P subtype restriction enzyme that recognizes the double-stranded sequence 5'-GATC-3'; the cleavage site is unknown. The chain is Type II restriction enzyme MjaIII (mjaIIIR) from Methanocaldococcus jannaschii (strain ATCC 43067 / DSM 2661 / JAL-1 / JCM 10045 / NBRC 100440) (Methanococcus jannaschii).